Reading from the N-terminus, the 139-residue chain is Mitochondrial intermembrane space import and assembly protein 40-A (139 aa).

Cystine bridges form between Cys53/Cys55, Cys64/Cys97, and Cys74/Cys87. Positions 61-105 (SGPCGEQFKSAFSCFHYSQEEIKGSDCLDQFRGMQECMQKYPDLY) constitute a CHCH domain. 2 short sequence motifs (cx9C motif) span residues 64–74 (CGEQFKSAFSC) and 87–97 (CLDQFRGMQEC). A disordered region spans residues 103–139 (DLYPQEDDEEEAEKEKQNKEAEPSVTQSSDTKEESSS). Residues 115–124 (EKEKQNKEAE) are compositionally biased toward basic and acidic residues.

In terms of assembly, monomer. Can form homooligomers.

It is found in the mitochondrion intermembrane space. Its function is as follows. Central component of a redox-sensitive mitochondrial intermembrane space import machinery which is required for the biogenesis of respiratory chain complexes. Functions as chaperone and catalyzes the formation of disulfide bonds in substrate proteins, such as COX17 or MICU1. Required for the import and folding of small cysteine-containing proteins (small Tim) in the mitochondrial intermembrane space (IMS). Precursor proteins to be imported into the IMS are translocated in their reduced form into the mitochondria. In Xenopus laevis (African clawed frog), this protein is Mitochondrial intermembrane space import and assembly protein 40-A (chchd4-a).